Consider the following 258-residue polypeptide: Heat-labile enterotoxin A chain (258 aa).

The signal sequence occupies residues 1–18 (MKNITFIFFILLASPLYA). 25–39 (RADSRPPDEIKRSGG) provides a ligand contact to NAD(+). Glu-128 is a catalytic residue. Cys-205 and Cys-217 are joined by a disulfide.

It belongs to the enterotoxin A family. In terms of assembly, heterohexamer of one A chain and of five B chains.

Functionally, the biological activity of the toxin is produced by the A chain, which activates intracellular adenyl cyclase. The polypeptide is Heat-labile enterotoxin A chain (eltA) (Escherichia coli O78:H11 (strain H10407 / ETEC)).